The chain runs to 161 residues: 2-C-methyl-D-erythritol 2,4-cyclodiphosphate synthase (161 aa).

Residues Asp-10 and His-12 each contribute to the a divalent metal cation site. 4-CDP-2-C-methyl-D-erythritol 2-phosphate is bound by residues Asp-10–His-12 and His-36–Ser-37. His-44 serves as a coordination point for a divalent metal cation. 4-CDP-2-C-methyl-D-erythritol 2-phosphate contacts are provided by residues Asp-58–Gly-60, Thr-134–Glu-137, Phe-141, and Arg-144.

This sequence belongs to the IspF family. Homotrimer. A divalent metal cation serves as cofactor.

It catalyses the reaction 4-CDP-2-C-methyl-D-erythritol 2-phosphate = 2-C-methyl-D-erythritol 2,4-cyclic diphosphate + CMP. It functions in the pathway isoprenoid biosynthesis; isopentenyl diphosphate biosynthesis via DXP pathway; isopentenyl diphosphate from 1-deoxy-D-xylulose 5-phosphate: step 4/6. Its function is as follows. Involved in the biosynthesis of isopentenyl diphosphate (IPP) and dimethylallyl diphosphate (DMAPP), two major building blocks of isoprenoid compounds. Catalyzes the conversion of 4-diphosphocytidyl-2-C-methyl-D-erythritol 2-phosphate (CDP-ME2P) to 2-C-methyl-D-erythritol 2,4-cyclodiphosphate (ME-CPP) with a corresponding release of cytidine 5-monophosphate (CMP). This chain is 2-C-methyl-D-erythritol 2,4-cyclodiphosphate synthase, found in Parabacteroides distasonis (strain ATCC 8503 / DSM 20701 / CIP 104284 / JCM 5825 / NCTC 11152).